Here is a 126-residue protein sequence, read N- to C-terminus: Fluoride-specific ion channel FluC (126 aa).

A run of 4 helical transmembrane segments spans residues 5-25 (FILA…LVGI), 39-59 (TLFI…LFAV), 69-89 (IFLV…SLDT), and 103-123 (AYMI…IQIV). Na(+) is bound by residues Gly77 and Thr80.

This sequence belongs to the fluoride channel Fluc/FEX (TC 1.A.43) family.

The protein resides in the cell inner membrane. It carries out the reaction fluoride(in) = fluoride(out). With respect to regulation, na(+) is not transported, but it plays an essential structural role and its presence is essential for fluoride channel function. Fluoride-specific ion channel. Important for reducing fluoride concentration in the cell, thus reducing its toxicity. This chain is Fluoride-specific ion channel FluC, found in Nitrobacter winogradskyi (strain ATCC 25391 / DSM 10237 / CIP 104748 / NCIMB 11846 / Nb-255).